The primary structure comprises 1621 residues: MEGCMGEESFQMWELNRRLEAYLARVKALEEQNELLSAELGGLRAQSADTSWRAHADDELAALRALVDQRWREKHAAEVARDNLAEELEGVAGRCQQLRLARERTTEEVARNRRAVEAEKCARAWLSSQVAELERELEALRVAHEEERVGLNAQAACAPRCPAPPRGPPAPAPEVEELARRLGEAWRGAVRGYQERVAHMETSLGQARERLGRAVQGAREGRLELQQLQAERGGLLERRAALEQRLEGRWQERLRATEKFQLAVEALEQEKQGLQSQIAQVLEGRQQLAHLKMSLSLEVATYRTLLEAENSRLQTPGGGSKTSLSFQDPKLELQFPRTPEGRRLGSLLPVLSPTSLPSPLPATLETPVPAFLKNQEFLQARTPTLASTPIPPTPQAPSPAVDAEIRAQDAPLSLLQTQGGRKQAPEPLRAEARVAIPASVLPGPEEPGGQRQEASTGQSPEDHASLAPPLSPDHSSLEAKDGESGGSRVFSICRGEGEGQIWGLVEKETAIEGKVVSSLQQEIWEEEDLNRKEIQDSQVPLEKETLKSLGEEIQESLKTLENQSHETLERENQECPRSLEEDLETLKSLEKENKELLKDVEVVRPLEKEAVGQLKPTGKEDTQTLQSLQKENQELMKSLEGNLETFLFPGTENQELVSSLQENLESLTALEKENQEPLRSPEVGDEEALRPLTKENQEPLRSLEDENKEAFRSLEKENQEPLKTLEEEDQSIVRPLETENHKSLRSLEEQDQETLRTLEKETQQRRRSLGEQDQMTLRPPEKVDLEPLKSLDQEIARPLENENQEFLKSLKEESVEAVKSLETEILESLKSAGQENLETLKSPETQAPLWTPEEINQGAMNPLEKEIQEPLESVEVNQETFRLLEEENQESLRSLGAWNLENLRSPEEVDKESQRNLEEEENLGKGEYQESLRSLEEEGQELPQSADVQRWEDTVEKDQELAQESPPGMAGVENEDEAELNLREQDGFTGKEEVVEQGELNATEEVWIPGEGHPESPEPKEQRGLVEGASVKGGAEGLQDPEGQSQQVGAPGLQAPQGLPEAIEPLVEDDVAPGGDQASPEVMLGSEPAMGESAAGAEPGPGQGVGGLGDPGHLTREEVMEPPLEEESLEAKRVQGLEGPRKDLEEAGGLGTEFSELPGKSRDPWEPPREGREESEAEAPRGAEEAFPAETLGHTGSDAPSPWPLGSEEAEEDVPPVLVSPSPTYTPILEDAPGPQPQAEGSQEASWGVQGRAEALGKVESEQEELGSGEIPEGPQEEGEESREESEEDELGETLPDSTPLGFYLRSPTSPRWDPTGEQRPPPQGETGKEGWDPAVLASEGLEAPPSEKEEGEEGEEECGRDSDLSEEFEDLGTEAPFLPGVPGEVAEPLGQVPQLLLDPAAWDRDGESDGFADEEESGEEGEEDQEEGREPGAGRWGPGSSVGSLQALSSSQRGEFLESDSVSVSVPWDDSLRGAVAGAPKTALETESQDSAEPSGSEEESDPVSLEREDKVPGPLEIPSGMEDAGPGADIIGVNGQGPNLEGKSQHVNGGVMNGLEQSEEVGQGMPLVSEGDRGSPFQEEEGSALKTSWAGAPVHLGQGQFLKFTQREGDRESWSSGED.

M1 carries the post-translational modification N-acetylmethionine. The tract at residues 1–7 (MEGCMGE) is head. The interval 8 to 43 (ESFQMWELNRRLEAYLARVKALEEQNELLSAELGGL) is coil 1A. In terms of domain architecture, IF rod spans 8–313 (ESFQMWELNR…TLLEAENSRL (306 aa)). Residues 44 to 55 (RAQSADTSWRAH) are linker 1. The tract at residues 56-151 (ADDELAALRA…VAHEEERVGL (96 aa)) is coil 1B. The segment at 152–173 (NAQAACAPRCPAPPRGPPAPAP) is linker 12. The interval 174–192 (EVEELARRLGEAWRGAVRG) is coil 2A. The linker 2 stretch occupies residues 193–195 (YQE). The tract at residues 196–313 (RVAHMETSLG…TLLEAENSRL (118 aa)) is coil 2B. A Phosphoserine modification is found at S311. Positions 314–1621 (QTPGGGSKTS…DRESWSSGED (1308 aa)) are tail. Phosphothreonine is present on T315. Phosphoserine is present on S325. T338 is subject to Phosphothreonine. S355 and S358 each carry phosphoserine. Phosphothreonine is present on T388. 12 positions are modified to phosphoserine: S398, S471, S476, S548, S564, S578, S588, S638, S680, S702, S746, and S768. The tract at residues 439–490 (SVLPGPEEPGGQRQEASTGQSPEDHASLAPPLSPDHSSLEAKDGESGGSRVF) is disordered. The interval 670–788 (LEKENQEPLR…PPEKVDLEPL (119 aa)) is disordered. Composition is skewed to basic and acidic residues over residues 687-725 (EALRPLTKENQEPLRSLEDENKEAFRSLEKENQEPLKTL), 736-770 (LETENHKSLRSLEEQDQETLRTLEKETQQRRRSLG), and 779-788 (PPEKVDLEPL). S790 is modified (phosphoserine). K811 is covalently cross-linked (Glycyl lysine isopeptide (Lys-Gly) (interchain with G-Cter in SUMO1); alternate). K811 is covalently cross-linked (Glycyl lysine isopeptide (Lys-Gly) (interchain with G-Cter in SUMO2); alternate). S820, S831, and S842 each carry phosphoserine. T851 bears the Phosphothreonine mark. S894, S905, S913, and S934 each carry phosphoserine. The disordered stretch occupies residues 895–1593 (LGAWNLENLR…GSALKTSWAG (699 aa)). 4 stretches are compositionally biased toward basic and acidic residues: residues 904–936 (RSPEEVDKESQRNLEEEENLGKGEYQESLRSLE), 949–960 (QRWEDTVEKDQE), 980–994 (LNLREQDGFTGKEEV), and 1012–1024 (GHPESPEPKEQRG). Position 1016 is a phosphoserine (S1016). The segment covering 1085-1098 (GSEPAMGESAAGAE) has biased composition (low complexity). Over residues 1099–1110 (PGPGQGVGGLGD) the composition is skewed to gly residues. Basic and acidic residues-rich tracts occupy residues 1129 to 1145 (LEAKRVQGLEGPRKDLE) and 1159 to 1184 (GKSRDPWEPPREGREESEAEAPRGAE). Phosphoserine occurs at positions 1261, 1282, 1286, 1310, 1347, 1409, 1418, and 1452. A compositionally biased stretch (acidic residues) spans 1275 to 1292 (PQEEGEESREESEEDELG). Positions 1409-1428 (SDGFADEEESGEEGEEDQEE) are enriched in acidic residues. Composition is skewed to low complexity over residues 1440 to 1453 (GSSVGSLQALSSSQ) and 1460 to 1470 (SDSVSVSVPWD). Positions 1486-1495 (ETESQDSAEP) are enriched in polar residues. Phosphoserine occurs at positions 1496, 1498, 1577, 1617, and 1618.

Belongs to the intermediate filament family. Forms homodimers and homotetramers in vitro. In mixtures with other intermediate filament proteins such as vimentin and alpha-internexin, tis protein preferentially forms heterodimers which can assemble to form intermediate filaments if nestin does not exceed 25%. Interacts with FHOD3. Post-translationally, constitutively phosphorylated. This increases during mitosis when the cytoplasmic intermediate filament network is reorganized. As to expression, CNS stem cells.

Its function is as follows. Required for brain and eye development. Promotes the disassembly of phosphorylated vimentin intermediate filaments (IF) during mitosis and may play a role in the trafficking and distribution of IF proteins and other cellular factors to daughter cells during progenitor cell division. Required for survival, renewal and mitogen-stimulated proliferation of neural progenitor cells. The chain is Nestin (NES) from Homo sapiens (Human).